The chain runs to 443 residues: Probable D-serine dehydratase (443 aa).

The residue at position 118 (lysine 118) is an N6-(pyridoxal phosphate)lysine.

Belongs to the serine/threonine dehydratase family. DsdA subfamily. Pyridoxal 5'-phosphate is required as a cofactor.

The enzyme catalyses D-serine = pyruvate + NH4(+). This chain is Probable D-serine dehydratase, found in Vibrio parahaemolyticus serotype O3:K6 (strain RIMD 2210633).